A 373-amino-acid chain; its full sequence is Flagellar P-ring protein (373 aa).

A signal peptide spans 1-28 (MPRVSTHLVKLAAAALCALLLSAVAASA).

Belongs to the FlgI family. The basal body constitutes a major portion of the flagellar organelle and consists of four rings (L,P,S, and M) mounted on a central rod.

It localises to the periplasm. The protein localises to the bacterial flagellum basal body. Its function is as follows. Assembles around the rod to form the L-ring and probably protects the motor/basal body from shearing forces during rotation. The sequence is that of Flagellar P-ring protein from Rhodopseudomonas palustris (strain ATCC BAA-98 / CGA009).